The primary structure comprises 371 residues: Probable trehalose-phosphate phosphatase 1 (371 aa).

The protein belongs to the trehalose phosphatase family. A divalent metal cation is required as a cofactor. Expressed in roots and shoots.

It catalyses the reaction alpha,alpha-trehalose 6-phosphate + H2O = alpha,alpha-trehalose + phosphate. Its pathway is glycan biosynthesis; trehalose biosynthesis. In terms of biological role, removes the phosphate from trehalose 6-phosphate to produce free trehalose. Trehalose accumulation in plant improves abiotic stress tolerance. The sequence is that of Probable trehalose-phosphate phosphatase 1 (TPP1) from Oryza sativa subsp. japonica (Rice).